Reading from the N-terminus, the 213-residue chain is Orotate phosphoribosyltransferase (213 aa).

K26 lines the 5-phospho-alpha-D-ribose 1-diphosphate pocket. 34-35 (FF) contributes to the orotate binding site. 5-phospho-alpha-D-ribose 1-diphosphate is bound by residues 72–73 (YK), R99, K100, K103, H105, and 124–132 (DDVITAGTA). The orotate site is built by T128 and R156.

Belongs to the purine/pyrimidine phosphoribosyltransferase family. PyrE subfamily. As to quaternary structure, homodimer. Mg(2+) is required as a cofactor.

The catalysed reaction is orotidine 5'-phosphate + diphosphate = orotate + 5-phospho-alpha-D-ribose 1-diphosphate. Its pathway is pyrimidine metabolism; UMP biosynthesis via de novo pathway; UMP from orotate: step 1/2. Functionally, catalyzes the transfer of a ribosyl phosphate group from 5-phosphoribose 1-diphosphate to orotate, leading to the formation of orotidine monophosphate (OMP). The chain is Orotate phosphoribosyltransferase from Vibrio vulnificus (strain CMCP6).